We begin with the raw amino-acid sequence, 693 residues long: Cleavage and polyadenylation specificity factor subunit 3-I (693 aa).

The HXHXDH motif signature appears at 81–86 (HFHIDH).

It belongs to the metallo-beta-lactamase superfamily. RNA-metabolizing metallo-beta-lactamase-like family. INTS11 subfamily. In terms of assembly, component of the CPSF complex, at least composed of CPSF160, CPSF100, CPSF73-I, CPSF73-II, CPSF30, FY and FIPS5. Interacts with CLPS3, CPSF100, CPSF160 and FY. Highly expressed in carpels. Also detected in seedlings, roots, stems, leaves, flowers and siliques.

The protein localises to the nucleus. Component of the cleavage and polyadenylation specificity factor (CPSF) complex that play a key role in pre-mRNA 3'-end formation, recognizing the AAUAAA signal sequence and interacting with poly(A) polymerase and other factors to bring about cleavage and poly(A) addition. May function as mRNA 3'-end-processing endonuclease and also be involved in the histone 3'-end pre-mRNA processing. This is Cleavage and polyadenylation specificity factor subunit 3-I (CPSF73-I) from Arabidopsis thaliana (Mouse-ear cress).